The sequence spans 136 residues: Probable intron-encoded DNA endonuclease 3 (136 aa).

It belongs to the LAGLIDADG endonuclease family.

The protein localises to the mitochondrion. Functionally, mitochondrial DNA endonuclease involved in intron homing. In Mycosarcoma maydis (Corn smut fungus), this protein is Probable intron-encoded DNA endonuclease 3 (hegI3).